We begin with the raw amino-acid sequence, 241 residues long: Aspartate/glutamate leucyltransferase (241 aa).

The protein belongs to the R-transferase family. Bpt subfamily.

The protein resides in the cytoplasm. It catalyses the reaction N-terminal L-glutamyl-[protein] + L-leucyl-tRNA(Leu) = N-terminal L-leucyl-L-glutamyl-[protein] + tRNA(Leu) + H(+). It carries out the reaction N-terminal L-aspartyl-[protein] + L-leucyl-tRNA(Leu) = N-terminal L-leucyl-L-aspartyl-[protein] + tRNA(Leu) + H(+). Functionally, functions in the N-end rule pathway of protein degradation where it conjugates Leu from its aminoacyl-tRNA to the N-termini of proteins containing an N-terminal aspartate or glutamate. The protein is Aspartate/glutamate leucyltransferase of Helicobacter hepaticus (strain ATCC 51449 / 3B1).